Consider the following 645-residue polypeptide: Ethylene response sensor 2 (645 aa).

A run of 4 helical transmembrane segments spans residues 5 to 25 (LLVQ…VTAA), 54 to 74 (VGDF…VYFV), 86 to 106 (VVCE…LAGF), and 125 to 145 (LTGI…PLLL). C97 and H101 together coordinate Cu cation. The GAF domain maps to 190 to 346 (DRHTILYTTL…VVADQVAVAI (157 aa)). Residues 389–623 (MMSDAMRCPV…VFRFQLRRSM (235 aa)) enclose the Histidine kinase domain.

This sequence belongs to the ethylene receptor family. Heteromer with ETR1. Cu cation is required as a cofactor. In terms of processing, autophosphorylated predominantly on Ser residues. As to expression, expressed in etiolated seedlings, leaves, roots and stems. Highly expressed in flowers, stamens, pollen cells, tapetum cells, carpels and ovules.

The protein localises to the endoplasmic reticulum membrane. Functionally, ethylene receptor related to bacterial two-component regulators. Acts as a redundant negative regulator of ethylene signaling. This Arabidopsis thaliana (Mouse-ear cress) protein is Ethylene response sensor 2 (ERS2).